A 437-amino-acid polypeptide reads, in one-letter code: Beta-1,3-galactosyl-O-glycosyl-glycoprotein beta-1,6-N-acetylglucosaminyltransferase 3 (437 aa).

At 1-12 (MTSWQRLCWHYR) the chain is on the cytoplasmic side. Residues 13–30 (LWTLGCYMLLAILALKLS) traverse the membrane as a helical; Signal-anchor for type II membrane protein segment. The Lumenal segment spans residues 31–437 (LRLKCDFDAM…RHKAIYGTEL (407 aa)). Intrachain disulfides connect Cys-70–Cys-227, Cys-161–Cys-381, Cys-182–Cys-209, and Cys-390–Cys-422. N-linked (GlcNAc...) asparagine glycosylation is present at Asn-288.

The protein belongs to the glycosyltransferase 14 family. Post-translationally, N-glycosylated.

Its subcellular location is the golgi apparatus membrane. It carries out the reaction a 3-O-[beta-D-galactosyl-(1-&gt;3)-N-acetyl-alpha-D-galactosaminyl]-L-seryl-[protein] + UDP-N-acetyl-alpha-D-glucosamine = 3-O-{beta-D-galactosyl-(1-&gt;3)-[N-acetyl-beta-D-glucosaminyl-(1-&gt;6)]-N-acetyl-alpha-D-galactosaminyl}-L-seryl-[protein] + UDP + H(+). The enzyme catalyses a 3-O-[beta-D-galactosyl-(1-&gt;3)-N-acetyl-alpha-D-galactosaminyl]-L-threonyl-[protein] + UDP-N-acetyl-alpha-D-glucosamine = a 3-O-{beta-D-galactosyl-(1-&gt;3)-[N-acetyl-beta-D-glucosaminyl-(1-&gt;6)]-N-acetyl-alpha-D-galactosaminyl}-L-threonyl-[protein] + UDP + H(+). The catalysed reaction is a beta-D-Gal-(1-&gt;4)-beta-D-GlcNAc-(1-&gt;3)-beta-D-Gal-(1-&gt;4)-beta-D-GlcNAc derivative + UDP-N-acetyl-alpha-D-glucosamine = a beta-D-Gal-(1-&gt;4)-beta-D-GlcNAc-(1-&gt;3)-[beta-D-GlcNAc-(1-&gt;6)]-beta-D-Gal-(1-&gt;4)-N-acetyl-beta-D-glucosaminyl derivative + UDP + H(+). It catalyses the reaction 3-O-[N-acetyl-beta-D-glucosaminyl-(1-&gt;3)-N-acetyl-alpha-D-galactosaminyl]-L-seryl-[protein] + UDP-N-acetyl-alpha-D-glucosamine = 3-O-[N-acetyl-beta-D-glucosaminyl-(1-&gt;3)-[N-acetyl-beta-D-glucosaminyl-(1-&gt;6)]-N-acetyl-alpha-D-galactosaminyl]-L-seryl-[protein] + UDP + H(+). It carries out the reaction a 3-O-[N-acetyl-beta-D-glucosaminyl-(1-&gt;3)-N-acetyl-alpha-D-galactosaminyl]-L-threonyl-[protein] + UDP-N-acetyl-alpha-D-glucosamine = 3-O-[N-acetyl-beta-D-glucosaminyl-(1-&gt;3)-[N-acetyl-beta-D-glucosaminyl-(1-&gt;6)]-N-acetyl-alpha-D-galactosaminyl]-L-threonyl-[protein] + UDP + H(+). It functions in the pathway protein modification; protein glycosylation. Glycosyltransferase that can synthesize all known mucin beta 6 N-acetylglucosaminides. Mediates core 2 and core 4 O-glycan branching, 2 important steps in mucin-type biosynthesis. Also has I-branching enzyme activity by converting linear into branched poly-N-acetyllactosaminoglycans, leading to introduce the blood group I antigen during embryonic development. The sequence is that of Beta-1,3-galactosyl-O-glycosyl-glycoprotein beta-1,6-N-acetylglucosaminyltransferase 3 (Gcnt3) from Mus musculus (Mouse).